Consider the following 103-residue polypeptide: Co-chaperonin GroES (103 aa).

It belongs to the GroES chaperonin family. In terms of assembly, heptamer of 7 subunits arranged in a ring. Interacts with the chaperonin GroEL.

Its subcellular location is the cytoplasm. Functionally, together with the chaperonin GroEL, plays an essential role in assisting protein folding. The GroEL-GroES system forms a nano-cage that allows encapsulation of the non-native substrate proteins and provides a physical environment optimized to promote and accelerate protein folding. GroES binds to the apical surface of the GroEL ring, thereby capping the opening of the GroEL channel. The protein is Co-chaperonin GroES of Synechococcus sp. (strain JA-3-3Ab) (Cyanobacteria bacterium Yellowstone A-Prime).